Consider the following 872-residue polypeptide: MKELSSAQIRQMWLDFWKSKGHCVEPSANLVPVNDPTLLWINSGVATLKKYFDGSVITENPRITNAQKSIRTNDIENVGKTARHHTMFEMLGNFSIGDYFRDEAIEWGFELLTSPEWFDFPKDKLYMTYYPDDKDSYNRWIACGVEPSHLVPIEDNFWEIGAGPSGPDTEIFFDRGEDFDPENIGLRLLAEDIENDRYIEIWNIVLSQFNADPAVPRSEYKELPNKNIDTGAGLERLAAVMQGAKTNFETDLFMPIIREVEKLSGKTYDPDGDNMSFKVIADHIRALSFAIGDGALPGNEGRGYVLRRLLRRAVMHGRRLGINETFLYKLVLTVGQIMESYYPEVLEKRDFIEKIVKREEETFARTIDAGSGHLDSLLAQLKAEGKDTLEGKDIFKLYDTYGFPVELTEELAEDAGYKIDHEGFKSAMKEQQDRARAAVVKGGSMGMQNETLAGIVEESRFEYDTYSLESSLSVIIADNERTEAVSEGQALLVFAQTPFYAEMGGQVADTGRIKNDKGDTVAEVVDVQKAPNGQPLHTVNVLASLSVGTNYTLEINKERRLAVEKNHTATHLLHAALHNVIGEHATQAGSLNEEEFLRFDFTHFEAVSNEELRHIEQEVNEQIWNALTITTTETDVETAKEMGAMALFGEKYGKVVRVVQIGNYSVELCGGTHLNNSSEIGLFKIVKEEGIGSGTRRIIAVTGRQAFEAYRNQEDALKEIAATVKAPQLKDAAAKVQALSDSLRDFQKENAELKEKAAAAAAGDVFKDVQEAKGVRIIASQVDVADAGALRTFADNWKQKDYSDVLVLVAAIGEKVNVLVASKTKDVHAGNMIKELAPIVAGRGGGKPDMAMAGGSDASKIAELLAAVAETV.

4 residues coordinate Zn(2+): His567, His571, Cys669, and His673.

Belongs to the class-II aminoacyl-tRNA synthetase family. Requires Zn(2+) as cofactor.

It localises to the cytoplasm. The catalysed reaction is tRNA(Ala) + L-alanine + ATP = L-alanyl-tRNA(Ala) + AMP + diphosphate. Catalyzes the attachment of alanine to tRNA(Ala) in a two-step reaction: alanine is first activated by ATP to form Ala-AMP and then transferred to the acceptor end of tRNA(Ala). Also edits incorrectly charged Ser-tRNA(Ala) and Gly-tRNA(Ala) via its editing domain. The chain is Alanine--tRNA ligase from Streptococcus pyogenes serotype M5 (strain Manfredo).